The primary structure comprises 260 residues: Adenosylcobinamide-GDP ribazoletransferase (260 aa).

Helical transmembrane passes span 40-60 (AFPL…FMAY), 64-84 (LPPL…TGAL), 117-137 (FAAL…MTII), 192-212 (GIGL…LSLI), 214-234 (ALVL…AKIG), and 240-260 (TLGA…VMAL).

It belongs to the CobS family. Mg(2+) is required as a cofactor.

It localises to the cell inner membrane. The catalysed reaction is alpha-ribazole + adenosylcob(III)inamide-GDP = adenosylcob(III)alamin + GMP + H(+). It catalyses the reaction alpha-ribazole 5'-phosphate + adenosylcob(III)inamide-GDP = adenosylcob(III)alamin 5'-phosphate + GMP + H(+). The protein operates within cofactor biosynthesis; adenosylcobalamin biosynthesis; adenosylcobalamin from cob(II)yrinate a,c-diamide: step 7/7. Its function is as follows. Joins adenosylcobinamide-GDP and alpha-ribazole to generate adenosylcobalamin (Ado-cobalamin). Also synthesizes adenosylcobalamin 5'-phosphate from adenosylcobinamide-GDP and alpha-ribazole 5'-phosphate. The chain is Adenosylcobinamide-GDP ribazoletransferase from Brucella anthropi (strain ATCC 49188 / DSM 6882 / CCUG 24695 / JCM 21032 / LMG 3331 / NBRC 15819 / NCTC 12168 / Alc 37) (Ochrobactrum anthropi).